The primary structure comprises 156 residues: Ribosomal RNA large subunit methyltransferase H (156 aa).

Residues Leu73, Gly104, and 123–128 (LSPLTL) contribute to the S-adenosyl-L-methionine site.

Belongs to the RNA methyltransferase RlmH family. In terms of assembly, homodimer.

The protein resides in the cytoplasm. It carries out the reaction pseudouridine(1915) in 23S rRNA + S-adenosyl-L-methionine = N(3)-methylpseudouridine(1915) in 23S rRNA + S-adenosyl-L-homocysteine + H(+). Specifically methylates the pseudouridine at position 1915 (m3Psi1915) in 23S rRNA. In Pectobacterium atrosepticum (strain SCRI 1043 / ATCC BAA-672) (Erwinia carotovora subsp. atroseptica), this protein is Ribosomal RNA large subunit methyltransferase H.